The primary structure comprises 324 residues: uncharacterized protein (324 aa).

Residues 1–11 (MNTNINVNGSN) show a composition bias toward polar residues. 3 disordered regions span residues 1 to 77 (MNTN…YSYS), 132 to 194 (NNHY…NNNN), and 272 to 324 (DENI…DNDS). The segment covering 21-64 (NENNNNNNGRNNNTNNNNNGRYNNNNNNNNNNNNNNYNLNMNST) has biased composition (low complexity). Positions 279–324 (SNNNNNNNNNNNNSYNVNICRNNSNFNVNENNGGDNNNDNNNDNDS) are enriched in low complexity.

This is an uncharacterized protein from Dictyostelium discoideum (Social amoeba).